The sequence spans 417 residues: Serine hydroxymethyltransferase (417 aa).

(6S)-5,6,7,8-tetrahydrofolate contacts are provided by residues leucine 120 and 124–126 (GHL). Lysine 229 is modified (N6-(pyridoxal phosphate)lysine). 354-356 (SPF) is a (6S)-5,6,7,8-tetrahydrofolate binding site.

This sequence belongs to the SHMT family. Homodimer. Requires pyridoxal 5'-phosphate as cofactor.

It is found in the cytoplasm. It catalyses the reaction (6R)-5,10-methylene-5,6,7,8-tetrahydrofolate + glycine + H2O = (6S)-5,6,7,8-tetrahydrofolate + L-serine. It participates in one-carbon metabolism; tetrahydrofolate interconversion. It functions in the pathway amino-acid biosynthesis; glycine biosynthesis; glycine from L-serine: step 1/1. Catalyzes the reversible interconversion of serine and glycine with tetrahydrofolate (THF) serving as the one-carbon carrier. This reaction serves as the major source of one-carbon groups required for the biosynthesis of purines, thymidylate, methionine, and other important biomolecules. Also exhibits THF-independent aldolase activity toward beta-hydroxyamino acids, producing glycine and aldehydes, via a retro-aldol mechanism. This chain is Serine hydroxymethyltransferase, found in Acinetobacter radioresistens.